A 199-amino-acid chain; its full sequence is Protein-L-isoaspartate O-methyltransferase (199 aa).

Ser-51 is an active-site residue.

It belongs to the methyltransferase superfamily. L-isoaspartyl/D-aspartyl protein methyltransferase family.

It is found in the cytoplasm. The catalysed reaction is [protein]-L-isoaspartate + S-adenosyl-L-methionine = [protein]-L-isoaspartate alpha-methyl ester + S-adenosyl-L-homocysteine. Its function is as follows. Catalyzes the methyl esterification of L-isoaspartyl residues in peptides and proteins that result from spontaneous decomposition of normal L-aspartyl and L-asparaginyl residues. It plays a role in the repair and/or degradation of damaged proteins. The polypeptide is Protein-L-isoaspartate O-methyltransferase (Fervidobacterium nodosum (strain ATCC 35602 / DSM 5306 / Rt17-B1)).